A 739-amino-acid chain; its full sequence is Sulfate transporter (739 aa).

The disordered stretch occupies residues M1–P44. Position 12 is a phosphoserine (S12). 2 consecutive transmembrane segments (helical) span residues M112–L132 and P137–S157. N-linked (GlcNAc...) asparagine glycosylation is present at N205. 2 consecutive transmembrane segments (helical) span residues F227–Y247 and G255–L275. An N-linked (GlcNAc...) asparagine glycan is attached at N357. Helical transmembrane passes span L378 to V398, A420 to L440, L455 to F475, and L524 to L544. The 152-residue stretch at T568–A719 folds into the STAS domain.

This sequence belongs to the SLC26A/SulP transporter (TC 2.A.53) family. Post-translationally, N-glycosylated. As to expression, cartilage and intestine. Expressed in the kidney (at protein level).

The protein localises to the cell membrane. It localises to the apical cell membrane. The enzyme catalyses oxalate(in) + sulfate(out) = oxalate(out) + sulfate(in). The catalysed reaction is sulfate(out) + 2 chloride(in) = sulfate(in) + 2 chloride(out). It carries out the reaction oxalate(out) + 2 chloride(in) = oxalate(in) + 2 chloride(out). It catalyses the reaction bromide(in) + chloride(out) = bromide(out) + chloride(in). The enzyme catalyses nitrate(in) + chloride(out) = nitrate(out) + chloride(in). The catalysed reaction is iodide(in) + chloride(out) = iodide(out) + chloride(in). Its function is as follows. Sulfate transporter which mediates sulfate uptake into chondrocytes in order to maintain adequate sulfation of proteoglycans which is needed for cartilage development. Mediates electroneutral anion exchange of sulfate ions for oxalate ions, sulfate and oxalate ions for chloride and/or hydroxyl ions and chloride ions for bromide, iodide and nitrate ions. The coupling of sulfate transport to both hydroxyl and chloride ions likely serves to ensure transport at both acidic pH when most sulfate uptake is mediated by sulfate-hydroxide exchange and alkaline pH when most sulfate uptake is mediated by sulfate-chloride exchange. Essential for chondrocyte proliferation, differentiation and cell size expansion. The protein is Sulfate transporter (Slc26a2) of Rattus norvegicus (Rat).